The following is a 432-amino-acid chain: Gamma-glutamyl phosphate reductase (432 aa).

It belongs to the gamma-glutamyl phosphate reductase family.

The protein localises to the cytoplasm. It catalyses the reaction L-glutamate 5-semialdehyde + phosphate + NADP(+) = L-glutamyl 5-phosphate + NADPH + H(+). Its pathway is amino-acid biosynthesis; L-proline biosynthesis; L-glutamate 5-semialdehyde from L-glutamate: step 2/2. In terms of biological role, catalyzes the NADPH-dependent reduction of L-glutamate 5-phosphate into L-glutamate 5-semialdehyde and phosphate. The product spontaneously undergoes cyclization to form 1-pyrroline-5-carboxylate. In Psychrobacter sp. (strain PRwf-1), this protein is Gamma-glutamyl phosphate reductase.